Here is a 279-residue protein sequence, read N- to C-terminus: Putative hydroxypyruvate isomerase (279 aa).

Active-site proton donor/acceptor residues include E155 and E256. The tract at residues 260 to 279 is disordered; the sequence is GDDPSAQSFSWLPAGARAAR.

This sequence belongs to the hyi family.

The enzyme catalyses 3-hydroxypyruvate = 2-hydroxy-3-oxopropanoate. Functionally, catalyzes the reversible isomerization between hydroxypyruvate and 2-hydroxy-3-oxopropanoate (also termed tartronate semialdehyde). This is Putative hydroxypyruvate isomerase from Streptomyces coelicolor (strain ATCC BAA-471 / A3(2) / M145).